The primary structure comprises 978 residues: Regulator of telomere elongation helicase 1 homolog (978 aa).

A Helicase ATP-binding domain is found at 7 to 318; that stretch reads NGIPVNFPFE…EDDDAKKDFT (312 aa). Position 42 to 49 (42 to 49) interacts with ATP; it reads SPTGTGKT. [4Fe-4S] cluster is bound by residues C159, C177, C186, and C222. Positions 265–268 match the DEAH box motif; that stretch reads DEAH.

This sequence belongs to the helicase family. RAD3/XPD subfamily.

The protein localises to the nucleus. It carries out the reaction ATP + H2O = ADP + phosphate + H(+). Its function is as follows. A probable ATP-dependent DNA helicase implicated in DNA repair and the maintenance of genomic stability. Acts as an anti-recombinase to counteract toxic recombination and limit crossover during meiosis. Regulates meiotic recombination and crossover homeostasis by physically dissociating strand invasion events and thereby promotes noncrossover repair by meiotic synthesis dependent strand annealing (SDSA) as well as disassembly of D loop recombination intermediates. The sequence is that of Regulator of telomere elongation helicase 1 homolog from Culex quinquefasciatus (Southern house mosquito).